The sequence spans 48 residues: Delta-actitoxin-Bcg1c (48 aa).

3 cysteine pairs are disulfide-bonded: Cys4–Cys45, Cys6–Cys35, and Cys28–Cys46.

The protein resides in the secreted. The protein localises to the nematocyst. Its function is as follows. Binds specifically to voltage-gated sodium channels SCN1A/Nav1.1, thereby delaying their inactivation during signal transduction. The sequence is that of Delta-actitoxin-Bcg1c from Bunodosoma cangicum (Sea anemone).